Consider the following 192-residue polypeptide: Probable nicotinate-nucleotide adenylyltransferase (192 aa).

Belongs to the NadD family.

It carries out the reaction nicotinate beta-D-ribonucleotide + ATP + H(+) = deamido-NAD(+) + diphosphate. Its pathway is cofactor biosynthesis; NAD(+) biosynthesis; deamido-NAD(+) from nicotinate D-ribonucleotide: step 1/1. Catalyzes the reversible adenylation of nicotinate mononucleotide (NaMN) to nicotinic acid adenine dinucleotide (NaAD). The protein is Probable nicotinate-nucleotide adenylyltransferase of Bradyrhizobium sp. (strain ORS 278).